The following is a 101-amino-acid chain: Biogenesis of lysosome-related organelles complex 1 subunit BLS1 (101 aa).

Belongs to the BLOC1S1 family. Component of the biogenesis of lysosome-related organelles complex-1 (BLOC-1).

It localises to the endosome. Its function is as follows. Component of the biogenesis of lysosome-related organelles complex-1 (BLOC-1), a complex involved in endosomal cargo sorting. In Zygosaccharomyces rouxii (strain ATCC 2623 / CBS 732 / NBRC 1130 / NCYC 568 / NRRL Y-229), this protein is Biogenesis of lysosome-related organelles complex 1 subunit BLS1 (BLS1).